The chain runs to 266 residues: Glutamate racemase (266 aa).

Substrate-binding positions include 9-10 (DS) and 41-42 (YG). The Proton donor/acceptor role is filled by cysteine 72. 73–74 (NT) serves as a coordination point for substrate. The active-site Proton donor/acceptor is the cysteine 184. 185–186 (TH) provides a ligand contact to substrate.

This sequence belongs to the aspartate/glutamate racemases family.

It carries out the reaction L-glutamate = D-glutamate. It functions in the pathway cell wall biogenesis; peptidoglycan biosynthesis. Functionally, provides the (R)-glutamate required for cell wall biosynthesis. In Staphylococcus aureus (strain Mu3 / ATCC 700698), this protein is Glutamate racemase.